A 693-amino-acid chain; its full sequence is UvrABC system protein C (693 aa).

The GIY-YIG domain occupies 16–95 (DAPGVYRFRD…IKEFDPRFNV (80 aa)). Residues 208 to 243 (GVFLRRLESEMAAASAELDFERAARVRDDINALRRV) form the UVR domain. The interval 656 to 693 (APSPDDATTEPGAVGEPGTADGAAADPDGRDAVVVPEG) is disordered. Over residues 672-693 (PGTADGAAADPDGRDAVVVPEG) the composition is skewed to low complexity.

This sequence belongs to the UvrC family. Interacts with UvrB in an incision complex.

The protein resides in the cytoplasm. Functionally, the UvrABC repair system catalyzes the recognition and processing of DNA lesions. UvrC both incises the 5' and 3' sides of the lesion. The N-terminal half is responsible for the 3' incision and the C-terminal half is responsible for the 5' incision. In Beutenbergia cavernae (strain ATCC BAA-8 / DSM 12333 / CCUG 43141 / JCM 11478 / NBRC 16432 / NCIMB 13614 / HKI 0122), this protein is UvrABC system protein C.